Reading from the N-terminus, the 400-residue chain is Formate-dependent phosphoribosylglycinamide formyltransferase (400 aa).

N(1)-(5-phospho-beta-D-ribosyl)glycinamide is bound by residues 22 to 23 (EL) and Glu-82. Residues Arg-115, Lys-157, 162–167 (SSGKGQ), 197–200 (EGFI), and Glu-205 contribute to the ATP site. Positions 120–315 (RLAAETLGVP…EFELHARAIL (196 aa)) constitute an ATP-grasp domain. Residues Glu-274 and Glu-286 each contribute to the Mg(2+) site. N(1)-(5-phospho-beta-D-ribosyl)glycinamide is bound by residues Asp-293, Lys-362, and 369–370 (RR).

It belongs to the PurK/PurT family. As to quaternary structure, homodimer.

It carries out the reaction N(1)-(5-phospho-beta-D-ribosyl)glycinamide + formate + ATP = N(2)-formyl-N(1)-(5-phospho-beta-D-ribosyl)glycinamide + ADP + phosphate + H(+). The protein operates within purine metabolism; IMP biosynthesis via de novo pathway; N(2)-formyl-N(1)-(5-phospho-D-ribosyl)glycinamide from N(1)-(5-phospho-D-ribosyl)glycinamide (formate route): step 1/1. Functionally, involved in the de novo purine biosynthesis. Catalyzes the transfer of formate to 5-phospho-ribosyl-glycinamide (GAR), producing 5-phospho-ribosyl-N-formylglycinamide (FGAR). Formate is provided by PurU via hydrolysis of 10-formyl-tetrahydrofolate. The sequence is that of Formate-dependent phosphoribosylglycinamide formyltransferase from Variovorax paradoxus (strain S110).